We begin with the raw amino-acid sequence, 115 residues long: NADH-ubiquinone oxidoreductase chain 3 (115 aa).

The next 3 helical transmembrane spans lie at 3 to 23, 55 to 75, and 86 to 106; these read LMIT…IAFW, FFLV…LLPL, and LTLL…AYEW.

Belongs to the complex I subunit 3 family. As to quaternary structure, core subunit of respiratory chain NADH dehydrogenase (Complex I) which is composed of 45 different subunits. Interacts with TMEM186. Interacts with TMEM242.

The protein resides in the mitochondrion inner membrane. It carries out the reaction a ubiquinone + NADH + 5 H(+)(in) = a ubiquinol + NAD(+) + 4 H(+)(out). Functionally, core subunit of the mitochondrial membrane respiratory chain NADH dehydrogenase (Complex I) which catalyzes electron transfer from NADH through the respiratory chain, using ubiquinone as an electron acceptor. Essential for the catalytic activity of complex I. The chain is NADH-ubiquinone oxidoreductase chain 3 from Loxodonta africana (African elephant).